A 225-amino-acid polypeptide reads, in one-letter code: Uracil-DNA glycosylase (225 aa).

Aspartate 68 (proton acceptor) is an active-site residue.

The protein belongs to the uracil-DNA glycosylase (UDG) superfamily. UNG family.

It is found in the cytoplasm. It catalyses the reaction Hydrolyzes single-stranded DNA or mismatched double-stranded DNA and polynucleotides, releasing free uracil.. Excises uracil residues from the DNA which can arise as a result of misincorporation of dUMP residues by DNA polymerase or due to deamination of cytosine. In Mycolicibacterium vanbaalenii (strain DSM 7251 / JCM 13017 / BCRC 16820 / KCTC 9966 / NRRL B-24157 / PYR-1) (Mycobacterium vanbaalenii), this protein is Uracil-DNA glycosylase.